The chain runs to 199 residues: Large ribosomal subunit protein bL9 (199 aa).

The tract at residues 169–199 (TGGFTEEYDPNAEPGEIPTELLEGGEEAAEA) is disordered.

Belongs to the bacterial ribosomal protein bL9 family.

Functionally, binds to the 23S rRNA. The protein is Large ribosomal subunit protein bL9 of Novosphingobium aromaticivorans (strain ATCC 700278 / DSM 12444 / CCUG 56034 / CIP 105152 / NBRC 16084 / F199).